Reading from the N-terminus, the 32-residue chain is Giant hemoglobin AIV chain (32 aa).

This sequence belongs to the globin family. In terms of assembly, giant hemoglobin is composed of four heme-containing chains (AI to AIV), and two linker chains (AV and AVI).

The polypeptide is Giant hemoglobin AIV chain (Lamellibrachia sp. (Deep-sea giant tube worm)).